Reading from the N-terminus, the 842-residue chain is 9-beta-pimara-7,15-diene synthase, chloroplastic (842 aa).

The N-terminal 56 residues, 1–56 (MASPMEAVARSSLVLAPRRRRALGLLPAAAAAAPFVLDCRRRHNGGMRRPHVSFAC), are a transit peptide targeting the chloroplast. Residues Asp591, Asp595, Asn735, Ser739, and Glu743 each coordinate Mg(2+). A DDXXD motif motif is present at residues 591–595 (DDFFD).

It belongs to the terpene synthase family. The cofactor is Mg(2+). Expressed in roots.

Its subcellular location is the plastid. It localises to the chloroplast. It catalyses the reaction 9alpha-copalyl diphosphate = 9beta-pimara-7,15-diene + diphosphate. Its function is as follows. Involved in the biosynthesis of momilactone A and B phytoalexins. Catalyzes the conversion of syn-copalyl diphosphate to the phytoalexin precursor syn-pimara-7,15-diene. This Oryza sativa subsp. japonica (Rice) protein is 9-beta-pimara-7,15-diene synthase, chloroplastic.